The primary structure comprises 165 residues: Transcriptional repressor NrdR (165 aa).

Residues 3–34 (CPFCSANDTKVIDSRLVSDGHQVRRRRECLAC) fold into a zinc finger. In terms of domain architecture, ATP-cone spans 49-139 (PRIIKRDGSR…VYLSFEDISE (91 aa)).

The protein belongs to the NrdR family. The cofactor is Zn(2+).

Negatively regulates transcription of bacterial ribonucleotide reductase nrd genes and operons by binding to NrdR-boxes. This chain is Transcriptional repressor NrdR, found in Colwellia psychrerythraea (strain 34H / ATCC BAA-681) (Vibrio psychroerythus).